Consider the following 663-residue polypeptide: Spore germination protein GerIA (663 aa).

The segment covering Met-1 to Asn-13 has biased composition (basic residues). The tract at residues Met-1–Thr-175 is disordered. Positions Lys-47–Gln-56 are enriched in basic and acidic residues. Composition is skewed to low complexity over residues Asp-57–Gln-72, Pro-88–Ala-101, and Asp-122–Gln-150. 5 helical membrane-spanning segments follow: residues Ile-414 to Ile-434, Ile-451 to Leu-471, Ala-491 to Leu-511, Ala-541 to Ile-561, and Phe-578 to Phe-598.

It belongs to the GerABKA family.

It is found in the cell membrane. Required for inosine germination. In Bacillus cereus, this protein is Spore germination protein GerIA (gerIA).